The primary structure comprises 278 residues: Transmembrane protein 45B (278 aa).

Helical transmembrane passes span 7–27 (HALP…KYPL), 49–69 (IIEG…EQFV), 95–115 (YLFF…FNIV), 117–137 (LGLD…LFYF), 149–169 (IHSL…LEVI), 183–203 (LLIL…PPFG), and 215–235 (VMFI…ITAI). Phosphoserine occurs at positions 273 and 275.

This sequence belongs to the TMEM45 family.

The protein resides in the endosome membrane. Its subcellular location is the lysosome membrane. It is found in the golgi apparatus. It localises to the trans-Golgi network membrane. Functionally, plays a role in innate immunity. The protein is Transmembrane protein 45B (Tmem45b) of Rattus norvegicus (Rat).